A 736-amino-acid polypeptide reads, in one-letter code: Catalase-peroxidase (736 aa).

A disordered region spans residues Met1–Thr21. The tryptophyl-tyrosyl-methioninium (Trp-Tyr) (with M-250) cross-link spans Trp96–Tyr224. The active-site Proton acceptor is the His97. The segment at residues Tyr224–Met250 is a cross-link (tryptophyl-tyrosyl-methioninium (Tyr-Met) (with W-96)). His265 is a binding site for heme b.

Belongs to the peroxidase family. Peroxidase/catalase subfamily. In terms of assembly, homodimer or homotetramer. The cofactor is heme b. Post-translationally, formation of the three residue Trp-Tyr-Met cross-link is important for the catalase, but not the peroxidase activity of the enzyme.

The enzyme catalyses H2O2 + AH2 = A + 2 H2O. The catalysed reaction is 2 H2O2 = O2 + 2 H2O. In terms of biological role, bifunctional enzyme with both catalase and broad-spectrum peroxidase activity. This is Catalase-peroxidase from Dechloromonas aromatica (strain RCB).